Here is a 607-residue protein sequence, read N- to C-terminus: MEVTGRLFIWAILAVSCGAQLNSTEAEGKSRCTASLGGANLGETHKALVLQLSANENCTWTIERPENRSIRIIFSYIKLDPGSRCETENIKVFDGSSTSGPLLGKACSRNDFVPVFESSSNSMTFQIVTGLTKFPRSVFIFYYFFSAATVIPNCGGDLRALEGSFSSPNYPKPHPELAYCVWHIQVGKGYKIQLKFTDLLLEMDENCKFDFIAVYDGPSTTAGLLKQLCGRGKPTLESSSDAMTVVLSTDYANSYKGFSASYTSIYIHDVNTTSLSCVSDKMRVIISKSYLPALNYNESNLQLNDPTCRPNVSNVIEFSIPLHECGTVKKIEDHAISYTNRITFIESPVSAVITRQKLLQIVVTCEMEYNSTVEIMYITEDDIIQNQSVLGKYNTSLALYESDSFENLVQESPYYVDLNQTLFVQATLHTSDPSLVVFLDTCRASPTSDFASPTYDLISSGCCQDETCKVYPLFGHYGRFQFNAFKFLKHLNSVYLKCKILICDNNDQTSRCNQGCVPRRKRDIPSYKWKTDSVIGPIRLKRDRSASRDSGLLPQIHEAEISNQPLSRLYLFSFMVLALNVVIVAITTVKHFLNRWMDHRYQKLQVY.

The signal sequence occupies residues 1 to 19 (MEVTGRLFIWAILAVSCGA). A disulfide bridge connects residues C17 and C58. CUB domains follow at residues 20–146 (QLNS…YFFS) and 154–265 (CGGD…YTSI). The Lumenal portion of the chain corresponds to 20–568 (QLNSTEAEGK…AEISNQPLSR (549 aa)). N-linked (GlcNAc...) asparagine glycans are attached at residues N22, N57, and N67. 3 cysteine pairs are disulfide-bonded: C85-C107, C154-C180, and C207-C229. The ZP domain maps to 276 to 519 (SCVSDKMRVI…SRCNQGCVPR (244 aa)). N-linked (GlcNAc...) asparagine glycosylation occurs at N419. C442 and C498 are oxidised to a cystine. The chain crosses the membrane as a helical span at residues 569–589 (LYLFSFMVLALNVVIVAITTV). Over 590–607 (KHFLNRWMDHRYQKLQVY) the chain is Cytoplasmic.

Highly expressed in pancreatic acinar cells. Also expressed in epithelium of the uterus during late pregnancy but not detected in non-pregnant uterus or in a variety of other adult and fetal tissues.

Its subcellular location is the zymogen granule membrane. Localized to zymogen granules, where it functions in trypsinogen activation. May indirectly regulate cell motility, cell-cell and cell/extracellular matrix interactions. This chain is CUB and zona pellucida-like domain-containing protein 1, found in Mus musculus (Mouse).